The primary structure comprises 64 residues: DNA gyrase inhibitor YacG (64 aa).

Zn(2+) contacts are provided by Cys-10, Cys-13, Cys-29, and Cys-33.

It belongs to the DNA gyrase inhibitor YacG family. In terms of assembly, interacts with GyrB. Requires Zn(2+) as cofactor.

Inhibits all the catalytic activities of DNA gyrase by preventing its interaction with DNA. Acts by binding directly to the C-terminal domain of GyrB, which probably disrupts DNA binding by the gyrase. The sequence is that of DNA gyrase inhibitor YacG from Pectobacterium atrosepticum (strain SCRI 1043 / ATCC BAA-672) (Erwinia carotovora subsp. atroseptica).